A 296-amino-acid chain; its full sequence is (3R)-3-[(carboxymethyl)amino]fatty acid oxygenase/decarboxylase (296 aa).

The (3R)-3-[(carboxymethyl)amino]butanoate site is built by Tyr66, Tyr71, and Gly98. Positions 66, 71, and 98 each coordinate (3R)-3-{[carboxy(hydroxy)methyl]amino}butanoate. Residues His102 and Asp104 each contribute to the Fe(2+) site. Residues Tyr105 and Lys163 each coordinate (3R)-3-[(carboxymethyl)amino]butanoate. (3R)-3-{[carboxy(hydroxy)methyl]amino}butanoate is bound by residues Tyr105 and Lys163. His265 is a Fe(2+) binding site. Position 269 (His269) interacts with 2-oxoglutarate. Arg280 serves as a coordination point for (3R)-3-[(carboxymethyl)amino]butanoate. Arg280 is a binding site for (3R)-3-{[carboxy(hydroxy)methyl]amino}butanoate.

It belongs to the TfdA dioxygenase family. Fe(2+) is required as a cofactor.

The enzyme catalyses a (3R)-3-[(carboxymethyl)amino]fatty acid + 2 2-oxoglutarate + 2 O2 = a (3R)-3-isocyanyl-fatty acid + 2 succinate + 3 CO2 + 2 H2O. The catalysed reaction is a (3R)-3-[(carboxymethyl)amino]fatty acid + 2-oxoglutarate + O2 = a (3R)-3-{[carboxy(hydroxy)methyl]amino}fatty acid + succinate + CO2. It catalyses the reaction a (3R)-3-{[carboxy(hydroxy)methyl]amino}fatty acid + 2-oxoglutarate + O2 = a (3R)-3-isocyanyl-fatty acid + succinate + 2 CO2 + 2 H2O. It carries out the reaction (3R)-3-[(carboxymethyl)amino]butanoate + 2 2-oxoglutarate + 2 O2 = (3R)-3-isocyanylbutanoate + 2 succinate + 3 CO2 + 2 H2O. The enzyme catalyses (3R)-3-[(carboxymethyl)amino]butanoate + 2-oxoglutarate + O2 = (3R)-3-{[carboxy(hydroxy)methyl]amino}butanoate + succinate + CO2. The catalysed reaction is (3R)-3-{[carboxy(hydroxy)methyl]amino}butanoate + 2-oxoglutarate + O2 = (3R)-3-isocyanylbutanoate + succinate + 2 CO2 + 2 H2O. Its function is as follows. Involved in the biosynthesis of a unique class of isonitrile lipopeptides (INLPs). Catalyzes the conversion of (3R)-3-[(carboxymethyl)amino]fatty acids such as (3R)-3-[(carboxymethyl)amino]butanoate (CABA) to (3R)-3-isocyanylbutanoate (INBA) through an oxidative decarboxylation mechanism, thereby generating the isonitrile group of INLPs. The chain is (3R)-3-[(carboxymethyl)amino]fatty acid oxygenase/decarboxylase from Streptomyces coeruleorubidus.